The sequence spans 733 residues: DNA-binding protein SATB2 (733 aa).

Residues 1–47 (MERRSESPCLRDSPDRRSGSPDVKGPPPVKVARLEQNGSPMGARGRP) form a disordered region. Ser20 is modified (phosphoserine). Glycyl lysine isopeptide (Lys-Gly) (interchain with G-Cter in SUMO2) cross-links involve residues Lys24 and Lys30. Ser39 is modified (phosphoserine). The CMP domain occupies 57 to 158 (GLMIPVFCVV…VVTLKIQLQS (102 aa)). Lys161 is covalently cross-linked (Glycyl lysine isopeptide (Lys-Gly) (interchain with G-Cter in SUMO2)). The CUTL domain maps to 161–234 (KLEDLPAEQW…WYKKYKKIKV (74 aa)). A Glycyl lysine isopeptide (Lys-Gly) (interchain with G-Cter in SUMO) cross-link involves residue Lys233. A Glycyl lysine isopeptide (Lys-Gly) (interchain with G-Cter in SUMO); alternate cross-link involves residue Lys350. Lys350 is covalently cross-linked (Glycyl lysine isopeptide (Lys-Gly) (interchain with G-Cter in SUMO2); alternate). The CUT 1 DNA-binding region spans 350–437 (KPEPTNSSVE…ERDRIYQDER (88 aa)). The segment at 435-473 (DERERSMNPNVSMVSSASSSPSSSRTPQAKTSTPTTDLP) is disordered. A compositionally biased stretch (low complexity) spans 441-458 (MNPNVSMVSSASSSPSSS). Ser454 carries the phosphoserine modification. Residues 459–470 (RTPQAKTSTPTT) are compositionally biased toward polar residues. A Phosphothreonine modification is found at Thr467. A DNA-binding region (CUT 2) is located at residues 473 to 560 (PIKVDGANVN…ERDVIYEEES (88 aa)). Lys475 is covalently cross-linked (Glycyl lysine isopeptide (Lys-Gly) (interchain with G-Cter in SUMO2)). Disordered regions lie at residues 580 to 617 (QVLH…KPRS) and 691 to 733 (DEEL…TDQR). Ser594 bears the Phosphoserine mark. The segment at residues 615-674 (PRSRTKISLEALGILQSFIHDVGLYPDQEAIHTLSAQLDLPKHTIIKFFQNQRYHVKHHG) is a DNA-binding region (homeobox). The segment covering 694–708 (LLTESEENDSEEGSE) has biased composition (acidic residues). Residues 709–733 (EMYKVEAEEENADKSKAAPAETDQR) are compositionally biased toward basic and acidic residues. Residue Lys724 forms a Glycyl lysine isopeptide (Lys-Gly) (interchain with G-Cter in SUMO2) linkage.

It belongs to the CUT homeobox family. Interacts with PIAS1. Interacts with ATF4 and RUNX2; resulting in enhanced DNA binding and transactivation by these transcription factors. Post-translationally, sumoylated by PIAS1. Sumoylation promotes nuclear localization, but represses transcription factor activity. In terms of tissue distribution, expressed in cortical neurons that extend axons across the corpus callosum. Also expressed in branchial arches and in cells of the osteoblast lineage, but not in chondrocytes and osteoclasts.

The protein localises to the nucleus matrix. Its function is as follows. Binds to DNA, at nuclear matrix- or scaffold-associated regions. Thought to recognize the sugar-phosphate structure of double-stranded DNA. Transcription factor controlling nuclear gene expression, by binding to matrix attachment regions (MARs) of DNA and inducing a local chromatin-loop remodeling. Acts as a docking site for several chromatin remodeling enzymes and also by recruiting corepressors (HDACs) or coactivators (HATs) directly to promoters and enhancers. Required for the initiation of the upper-layer neurons (UL1) specific genetic program and for the inactivation of deep-layer neurons (DL) and UL2 specific genes, probably by modulating Bcl11b expression. Repressor of Ctip2 and regulatory determinant of corticocortical connections in the developing cerebral cortex. May play an important role in palate formation. Acts as a molecular node in a transcriptional network regulating skeletal development and osteoblast differentiation. In Mus musculus (Mouse), this protein is DNA-binding protein SATB2 (Satb2).